We begin with the raw amino-acid sequence, 1329 residues long: BRCT domain-containing protein At4g02110 (1329 aa).

2 consecutive BRCT domains span residues 7–97 and 104–194; these read LPPK…SILY and NGIP…DYEI. Disordered regions lie at residues 295–378, 393–470, 576–645, 745–827, and 952–1077; these read ANKT…SMER, GEEF…TSEL, EVPE…SPTD, NDVP…ADGK, and AKKE…KESK. Polar residues-rich tracts occupy residues 323-335 and 363-378; these read SLAT…LQRS and SAFN…SMER. 2 stretches are compositionally biased toward basic and acidic residues: residues 410-422 and 600-611; these read VSRK…HHNS and RMKDKQETELTT. The segment covering 793-802 has biased composition (basic residues); the sequence is GKSRVKKTKI. Basic and acidic residues-rich tracts occupy residues 818 to 827 and 971 to 983; these read DGGDNSADGK and DDNK…EGIV. Low complexity predominate over residues 986 to 1004; it reads SSLQSGKKGSSSRVEVGKS. A compositionally biased stretch (basic and acidic residues) spans 1024-1047; it reads VMKDVGDNSAKEKENIAVDNESRK. Positions 1090-1181 constitute a BRCT 3 domain; that stretch reads FQDQEHEPKF…KLLQEEPYEW (92 aa).

The sequence is that of BRCT domain-containing protein At4g02110 from Arabidopsis thaliana (Mouse-ear cress).